The chain runs to 674 residues: ATP-dependent DNA helicase Hel308 (674 aa).

ATP is bound by residues glutamine 27 and 44–51; that span reads VPTAAGKT. In terms of domain architecture, Helicase ATP-binding spans 31–197; it reads IEQFRKGKNI…WLNASLIKSS (167 aa). Positions 142 to 145 match the DEAH box motif; it reads DEIH. Positions 224 to 411 constitute a Helicase C-terminal domain; that stretch reads DINLLVKETV…PEKVRFNTLA (188 aa).

Belongs to the helicase family. Hel308 subfamily. Monomer.

The enzyme catalyses Couples ATP hydrolysis with the unwinding of duplex DNA by translocating in the 3'-5' direction.. It carries out the reaction ATP + H2O = ADP + phosphate + H(+). DNA-dependent ATPase and 3'-5' DNA helicase that may be involved in repair of stalled replication forks. This Thermoplasma volcanium (strain ATCC 51530 / DSM 4299 / JCM 9571 / NBRC 15438 / GSS1) protein is ATP-dependent DNA helicase Hel308.